The sequence spans 233 residues: Outer membrane protein MIP (233 aa).

The N-terminal stretch at 1–20 (MKMKLVTAAIMGLAMSTAMA) is a signal peptide. In terms of domain architecture, PPIase FKBP-type spans 144–233 (SDTVTVEYTG…IHLISVKKAA (90 aa)).

This sequence belongs to the FKBP-type PPIase family.

It localises to the cell outer membrane. It catalyses the reaction [protein]-peptidylproline (omega=180) = [protein]-peptidylproline (omega=0). Its activity is regulated as follows. Strongly inhibited by FK506 but is completely resistant to cyclosporin A. Functionally, essential virulence factor associated with macrophage infectivity. Exhibits PPIase activity. The polypeptide is Outer membrane protein MIP (mip) (Legionella longbeachae).